We begin with the raw amino-acid sequence, 431 residues long: Glutamyl-tRNA reductase (431 aa).

Substrate is bound by residues T49 to R52, S109, E114 to Q116, and Q120. The active-site Nucleophile is C50. Residue G189–A194 participates in NADP(+) binding.

The protein belongs to the glutamyl-tRNA reductase family. In terms of assembly, homodimer.

The catalysed reaction is (S)-4-amino-5-oxopentanoate + tRNA(Glu) + NADP(+) = L-glutamyl-tRNA(Glu) + NADPH + H(+). The protein operates within porphyrin-containing compound metabolism; protoporphyrin-IX biosynthesis; 5-aminolevulinate from L-glutamyl-tRNA(Glu): step 1/2. It participates in porphyrin-containing compound metabolism; chlorophyll biosynthesis. In terms of biological role, catalyzes the NADPH-dependent reduction of glutamyl-tRNA(Glu) to glutamate 1-semialdehyde (GSA). The protein is Glutamyl-tRNA reductase of Synechococcus sp. (strain JA-3-3Ab) (Cyanobacteria bacterium Yellowstone A-Prime).